A 284-amino-acid chain; its full sequence is Four and a half LIM domains protein 5 (284 aa).

The C4-type zinc finger occupies 8–32 (CQYCTASLLGKKYVLKDDNLYCISC). LIM zinc-binding domains lie at 39-100 (NYCE…ECSS), 101-160 (KCFH…KEFA), 161-220 (HYCN…LYAK), and 221-283 (KCAA…ADTD).

In terms of assembly, interacts with CREM (via the third LIM domain). Interacts (via second LIM domain) with SPAG8.

It is found in the nucleus. May be involved in the regulation of spermatogenesis. Stimulates CREM transcriptional activity in a phosphorylation-independent manner. In Rattus norvegicus (Rat), this protein is Four and a half LIM domains protein 5 (Fhl5).